Consider the following 1040-residue polypeptide: Multidrug resistance protein MdtB (1040 aa).

Helical transmembrane passes span 16–36 (FIMR…AGII), 342–362 (DTQF…YLFL), 369–389 (IIPG…MVFL), 396–416 (LTLM…IVVI), 440–460 (IGFT…PLLF), 472–492 (FAVT…TLTP), 537–557 (WLTL…WVFI), 863–883 (LGST…VLGV), 888–908 (FIHP…ALLA), 911–931 (LAGS…IGIV), 968–988 (ILMT…STGV), and 998–1018 (IGMV…TPVI).

It belongs to the resistance-nodulation-cell division (RND) (TC 2.A.6) family. MdtB subfamily. Part of a tripartite efflux system composed of MdtA, MdtB and MdtC. MdtB forms a heteromultimer with MdtC.

It localises to the cell inner membrane. The polypeptide is Multidrug resistance protein MdtB (Klebsiella pneumoniae (strain 342)).